The primary structure comprises 224 residues: MNITYYGHATVGFEIDGVNVLIDPFLTSNPHTDVDPSTLRPDYLLLTHAHFDHIEDVELIAKASGATIVATHELATYYEKKGFSVHGMNIGGGHAFPFGRVTMTQAFHSSSFDMGDTPVYMGMPAGFIIETNELTVYHAGDTSLFSDMKMYGERFEIDVAFLPIGDNFTMGPTDALDAAQWLQAKRVVPIHFDTFPPIKQDAQAFCDQLHRRGLLIEPNTTIEI.

It belongs to the UPF0173 family.

In Exiguobacterium sp. (strain ATCC BAA-1283 / AT1b), this protein is UPF0173 metal-dependent hydrolase EAT1b_0495.